The sequence spans 209 residues: Inorganic pyrophosphatase (209 aa).

Positions 38, 52, and 64 each coordinate substrate. Asp-92, Asp-97, and Asp-130 together coordinate Mg(2+). A substrate-binding site is contributed by Tyr-167.

This sequence belongs to the PPase family. Homohexamer. The cofactor is Mg(2+).

The protein localises to the cytoplasm. The catalysed reaction is diphosphate + H2O = 2 phosphate + H(+). In terms of biological role, catalyzes the hydrolysis of inorganic pyrophosphate (PPi) forming two phosphate ions. This is Inorganic pyrophosphatase from Chlamydia trachomatis serovar L2 (strain ATCC VR-902B / DSM 19102 / 434/Bu).